Here is a 333-residue protein sequence, read N- to C-terminus: 6-phosphogluconolactonase (333 aa).

Belongs to the cycloisomerase 2 family.

It catalyses the reaction 6-phospho-D-glucono-1,5-lactone + H2O = 6-phospho-D-gluconate + H(+). It functions in the pathway carbohydrate degradation; pentose phosphate pathway; D-ribulose 5-phosphate from D-glucose 6-phosphate (oxidative stage): step 2/3. Its function is as follows. Catalyzes the hydrolysis of 6-phosphogluconolactone to 6-phosphogluconate. In Cronobacter sakazakii (strain ATCC BAA-894) (Enterobacter sakazakii), this protein is 6-phosphogluconolactonase.